The chain runs to 537 residues: Bifunctional purine biosynthesis protein PurH (537 aa).

The MGS-like domain occupies 11-158 (ADIQRVRRAL…KNHAYVGVIV (148 aa)).

The protein belongs to the PurH family.

The catalysed reaction is (6R)-10-formyltetrahydrofolate + 5-amino-1-(5-phospho-beta-D-ribosyl)imidazole-4-carboxamide = 5-formamido-1-(5-phospho-D-ribosyl)imidazole-4-carboxamide + (6S)-5,6,7,8-tetrahydrofolate. The enzyme catalyses IMP + H2O = 5-formamido-1-(5-phospho-D-ribosyl)imidazole-4-carboxamide. It functions in the pathway purine metabolism; IMP biosynthesis via de novo pathway; 5-formamido-1-(5-phospho-D-ribosyl)imidazole-4-carboxamide from 5-amino-1-(5-phospho-D-ribosyl)imidazole-4-carboxamide (10-formyl THF route): step 1/1. The protein operates within purine metabolism; IMP biosynthesis via de novo pathway; IMP from 5-formamido-1-(5-phospho-D-ribosyl)imidazole-4-carboxamide: step 1/1. The chain is Bifunctional purine biosynthesis protein PurH from Parvibaculum lavamentivorans (strain DS-1 / DSM 13023 / NCIMB 13966).